The chain runs to 476 residues: Doublecortin domain-containing protein 2 (476 aa).

Doublecortin domains lie at 17–100 and 139–221; these read KSVL…LNYL and CTIF…LPYS. Residues 234 to 476 form a disordered region; it reads FGQKASSLPP…QQNKDYAAVA (243 aa). Residues 261–272 show a composition bias toward polar residues; sequence STVGSSDNSSPQ. S270 is subject to Phosphoserine. Residues 279–289 are compositionally biased toward basic and acidic residues; it reads KKEDVNSEKLT. The span at 296-306 shows a compositional bias: polar residues; it reads KLKNSQETIPN. A compositionally biased stretch (basic and acidic residues) spans 354 to 366; it reads EKANKDAEQKEDF. Over residues 415 to 426 the composition is skewed to low complexity; sequence ELQQVNNELQLV. The span at 446–455 shows a compositional bias: basic and acidic residues; sequence DPQRPPRPEV.

As to quaternary structure, interacts with DVL1, DVL2 and DVL3. As to expression, ubiquitously expressed. In brain, highly expressed in the entorhinal cortex, inferior temporal cortex, medial temporal cortex, hypothalamus, amygdala and hippocampus. Expressed in liver by cholangiocytes, the epithelial cells of the bile ducts (at protein level).

Its subcellular location is the cell projection. It is found in the cilium. It localises to the cytoplasm. The protein resides in the cytoskeleton. The protein localises to the cilium axoneme. Its subcellular location is the kinocilium. Its function is as follows. Protein that plays a role in the inhibition of canonical Wnt signaling pathway. May be involved in neuronal migration during development of the cerebral neocortex. Involved in the control of ciliogenesis and ciliary length. This chain is Doublecortin domain-containing protein 2 (DCDC2), found in Homo sapiens (Human).